Reading from the N-terminus, the 123-residue chain is Large ribosomal subunit protein uL14 (123 aa).

The protein belongs to the universal ribosomal protein uL14 family. In terms of assembly, part of the 50S ribosomal subunit. Forms a cluster with proteins L3 and L19. In the 70S ribosome, L14 and L19 interact and together make contacts with the 16S rRNA in bridges B5 and B8.

In terms of biological role, binds to 23S rRNA. Forms part of two intersubunit bridges in the 70S ribosome. The polypeptide is Large ribosomal subunit protein uL14 (Vibrio cholerae serotype O1 (strain ATCC 39541 / Classical Ogawa 395 / O395)).